The following is a 628-amino-acid chain: Chaperone protein DnaK (628 aa).

Residue Thr-197 is modified to Phosphothreonine; by autocatalysis. The interval 597–628 (EQMYKGEQGAQGGAADTSKKKSDDDVIDAEIE) is disordered.

Belongs to the heat shock protein 70 family.

Acts as a chaperone. This Sulfurimonas denitrificans (strain ATCC 33889 / DSM 1251) (Thiomicrospira denitrificans (strain ATCC 33889 / DSM 1251)) protein is Chaperone protein DnaK.